We begin with the raw amino-acid sequence, 350 residues long: Small ribosomal subunit biogenesis GTPase RsgA (350 aa).

The segment covering 1–17 (MSKNKLSKGQQRRVQAN) has biased composition (polar residues). Positions 1–35 (MSKNKLSKGQQRRVQANHQRRLRTDRKPELDDSQL) are disordered. The 171-residue stretch at 103-273 (TSVLTRPDLY…VIDSPGVREF (171 aa)) folds into the CP-type G domain. Residues 159 to 162 (NKID) and 213 to 221 (GQSGVGKSS) contribute to the GTP site. Zn(2+) is bound by residues C297, C302, H304, and C310.

It belongs to the TRAFAC class YlqF/YawG GTPase family. RsgA subfamily. In terms of assembly, monomer. Associates with 30S ribosomal subunit, binds 16S rRNA. Requires Zn(2+) as cofactor.

The protein resides in the cytoplasm. Functionally, one of several proteins that assist in the late maturation steps of the functional core of the 30S ribosomal subunit. Helps release RbfA from mature subunits. May play a role in the assembly of ribosomal proteins into the subunit. Circularly permuted GTPase that catalyzes slow GTP hydrolysis, GTPase activity is stimulated by the 30S ribosomal subunit. The sequence is that of Small ribosomal subunit biogenesis GTPase RsgA from Yersinia pseudotuberculosis serotype O:1b (strain IP 31758).